A 410-amino-acid chain; its full sequence is Testis-specific protein TEX28 (410 aa).

Positions 1-43 are disordered; the sequence is MVLKAEHTRSPSATLPSNVPSCRSLSSSEDGPSGPSSLADGGL. Polar residues predominate over residues 10-23; that stretch reads SPSATLPSNVPSCR. Residues 24 to 38 show a composition bias toward low complexity; the sequence is SLSSSEDGPSGPSSL. Residues 93–128 adopt a coiled-coil conformation; sequence QAFEKVNQRASATIAQIEHRLHQCHQQLQELEEGCR. A disordered region spans residues 137 to 164; sequence ESDPANCEPPSEKALLSEPPEPGGEDGP. Residues 185–245 are a coiled coil; it reads QGTCLETEDV…LLLESLQEEK (61 aa). Residues 336 to 358 form a helical membrane-spanning segment; that stretch reads LSLATVLLVFVSTLCACPSSLIS.

Belongs to the TEX28 family. In terms of tissue distribution, testis specific.

It is found in the membrane. In Homo sapiens (Human), this protein is Testis-specific protein TEX28 (TEX28).